Here is a 723-residue protein sequence, read N- to C-terminus: Envelope glycoprotein H (723 aa).

An N-terminal signal peptide occupies residues 1–23; that stretch reads MSPATRFTVISCLVVSLITPSET. The Virion surface portion of the chain corresponds to 24 to 700; the sequence is SSWFDPFIEW…IIDIRQTSIF (677 aa). Residues N39, N45, N144, and N174 are each glycosylated (N-linked (GlcNAc...) asparagine; by host). The interaction with gL stretch occupies residues 197-263; that stretch reads HQFAIVLTFT…QSYRDDLLIV (67 aa). 6 N-linked (GlcNAc...) asparagine; by host glycosylation sites follow: N270, N340, N411, N543, N621, and N681. Residues 701–721 form a helical membrane-spanning segment; that stretch reads MIMLYCSLGVLLLYGLYRLLH. At 722–723 the chain is on the intravirion side; that stretch reads MI.

It belongs to the herpesviridae glycoprotein H family. As to quaternary structure, interacts with glycoprotein L (gL); this interaction is necessary for the correct processing and cell surface expression of gH. The heterodimer gH/gL seems to interact with gB trimers during fusion. In terms of processing, N-glycosylated, O-glycosylated, and sialylated.

It is found in the virion membrane. It localises to the host cell membrane. Its subcellular location is the host endosome membrane. Its function is as follows. The heterodimer glycoprotein H-glycoprotein L is required for the fusion of viral and plasma membranes leading to virus entry into the host cell. Following initial binding to host receptor, membrane fusion is mediated by the fusion machinery composed of gB and the heterodimer gH/gL. May also be involved in the fusion between the virion envelope and the outer nuclear membrane during virion morphogenesis. The sequence is that of Envelope glycoprotein H from Guinea pig cytomegalovirus (strain 22122) (GPCMV).